Consider the following 229-residue polypeptide: Coiled-coil domain-containing protein 134 (229 aa).

The first 22 residues, 1–22 (MDLLQFLAAFSVLLWPGTEVTG), serve as a signal peptide directing secretion. The N-linked (GlcNAc...) asparagine glycan is linked to Asn-148. Residues 182-229 (FKTDQTEFIPSTDPFQKALREEEKRRKKEERRKEIRKGPRISRSQSEL) form a disordered region. The stretch at 196–218 (FQKALREEEKRRKKEERRKEIRK) forms a coiled coil. The Prevents secretion from ER motif lies at 226 to 229 (QSEL).

Belongs to the CCDC134 family. Interacts with TADA2A. Associates with the PCAF complex via TADA2A binding. O-glycosylated, with additional sialic acid modifications.

It localises to the endoplasmic reticulum lumen. It is found in the secreted. Its subcellular location is the cytoplasm. The protein resides in the nucleus. Molecular adapter required to prevent protein hyperglycosylation of HSP90B1: during translation, associates with nascent HSP90B1 and the STT3A catalytic component of the OST-A complex and tethers them to a specialized translocon that forms a microenvironment for HSP90B1 folding. In the CCDC134-containing translocon, STT3A associates with the SRT pseudosubstrate motif of HSP90B1, preventing access to facultative glycosylation sites until folding is completed, preventing hyperglycosylation and subsequent degradation of HSP90B1. In extracellular secreted form, promotes proliferation and activation of CD8(+) T-cells, suggesting a cytokine-like function. May inhibit ERK and JNK signaling activity. May suppress cell migration and invasion activity, via its effects on ERK and JNK signaling. May also localize in the nucleus: enhances stability of the PCAF histone acetyltransferase (HAT) complex member TADA2A and thus promotes PCAF-mediated histone acetyltransferase activity. Has a critical role in the regulation of osteogenesis and bone development. The sequence is that of Coiled-coil domain-containing protein 134 (Ccdc134) from Mus musculus (Mouse).